The following is a 326-amino-acid chain: Amino acid--[acyl-carrier-protein] ligase 1 (326 aa).

Cys131 contacts Zn(2+). Residues Arg159, Glu161, and 168 to 169 each bind ATP; that span reads RL. Glu176 lines the Zn(2+) pocket. Residue Glu176 participates in an L-alpha-amino acid binding. ATP contacts are provided by residues Lys235 and 250 to 253; that span reads ACMS. Cys279 provides a ligand contact to Zn(2+). Arg286 contacts ATP.

The protein belongs to the class-II aminoacyl-tRNA synthetase family. Amino acid--[acyl-carrier-protein] ligase subfamily. Homodimer. It depends on Zn(2+) as a cofactor.

It catalyses the reaction an L-alpha-amino acid + holo-[ACP] + ATP = an L-alpha-aminoacyl-[ACP] + AMP + diphosphate. Its function is as follows. Catalyzes the ATP-dependent activation of L-glycine and its transfer to the phosphopantetheine prosthetic group covalently attached to the vicinal carrier protein bsr0959 of yet unknown function. May participate in nonribosomal peptide synthesis or related processes. L-alanine is a poor substrate whereas L-serine or D-amino acids are not substrates for ATP-dependent activation. Does not display tRNA aminoacylation activity. The polypeptide is Amino acid--[acyl-carrier-protein] ligase 1 (Bradyrhizobium diazoefficiens (strain JCM 10833 / BCRC 13528 / IAM 13628 / NBRC 14792 / USDA 110)).